The primary structure comprises 227 residues: ATP synthase F(0) complex subunit a (227 aa).

Transmembrane regions (helical) follow at residues 9 to 29, 69 to 89, 98 to 118, 132 to 152, 165 to 185, and 190 to 210; these read FASP…LPWV, WALL…LGLL, QLSL…IIGM, EGTP…SLFI, LTAG…LMPM, and AILT…VAMI.

The protein belongs to the ATPase A chain family. As to quaternary structure, component of the ATP synthase complex composed at least of ATP5F1A/subunit alpha, ATP5F1B/subunit beta, ATP5MC1/subunit c (homooctomer), MT-ATP6/subunit a, MT-ATP8/subunit 8, ATP5ME/subunit e, ATP5MF/subunit f, ATP5MG/subunit g, ATP5MK/subunit k, ATP5MJ/subunit j, ATP5F1C/subunit gamma, ATP5F1D/subunit delta, ATP5F1E/subunit epsilon, ATP5PF/subunit F6, ATP5PB/subunit b, ATP5PD/subunit d, ATP5PO/subunit OSCP. ATP synthase complex consists of a soluble F(1) head domain (subunits alpha(3) and beta(3)) - the catalytic core - and a membrane F(0) domain - the membrane proton channel (subunits c, a, 8, e, f, g, k and j). These two domains are linked by a central stalk (subunits gamma, delta, and epsilon) rotating inside the F1 region and a stationary peripheral stalk (subunits F6, b, d, and OSCP). Interacts with DNAJC30; interaction is direct.

It localises to the mitochondrion inner membrane. It catalyses the reaction H(+)(in) = H(+)(out). Subunit a, of the mitochondrial membrane ATP synthase complex (F(1)F(0) ATP synthase or Complex V) that produces ATP from ADP in the presence of a proton gradient across the membrane which is generated by electron transport complexes of the respiratory chain. ATP synthase complex consist of a soluble F(1) head domain - the catalytic core - and a membrane F(1) domain - the membrane proton channel. These two domains are linked by a central stalk rotating inside the F(1) region and a stationary peripheral stalk. During catalysis, ATP synthesis in the catalytic domain of F(1) is coupled via a rotary mechanism of the central stalk subunits to proton translocation. With the subunit c (ATP5MC1), forms the proton-conducting channel in the F(0) domain, that contains two crucial half-channels (inlet and outlet) that facilitate proton movement from the mitochondrial intermembrane space (IMS) into the matrix. Protons are taken up via the inlet half-channel and released through the outlet half-channel, following a Grotthuss mechanism. The chain is ATP synthase F(0) complex subunit a from Carassius auratus (Goldfish).